The following is a 293-amino-acid chain: Protease HtpX homolog (293 aa).

Helical transmembrane passes span 4-24 (IFLF…TLRV) and 40-60 (SLLI…LLIS). Residue His-146 coordinates Zn(2+). Glu-147 is a catalytic residue. His-150 lines the Zn(2+) pocket. A run of 2 helical transmembrane segments spans residues 161 to 181 (LIQG…GYFI) and 197 to 217 (FITV…IVAW). A Zn(2+)-binding site is contributed by Glu-223.

Belongs to the peptidase M48B family. Requires Zn(2+) as cofactor.

It localises to the cell inner membrane. The sequence is that of Protease HtpX homolog from Bordetella petrii (strain ATCC BAA-461 / DSM 12804 / CCUG 43448).